The sequence spans 272 residues: 3-methyl-2-oxobutanoate hydroxymethyltransferase (272 aa).

Mg(2+)-binding residues include Asp-51 and Asp-90. 3-methyl-2-oxobutanoate contacts are provided by residues 51-52 (DS), Asp-90, and Lys-118. Mg(2+) is bound at residue Glu-120. Glu-187 serves as the catalytic Proton acceptor.

Belongs to the PanB family. In terms of assembly, homodecamer; pentamer of dimers. The cofactor is Mg(2+).

The protein localises to the cytoplasm. It catalyses the reaction 3-methyl-2-oxobutanoate + (6R)-5,10-methylene-5,6,7,8-tetrahydrofolate + H2O = 2-dehydropantoate + (6S)-5,6,7,8-tetrahydrofolate. Its pathway is cofactor biosynthesis; (R)-pantothenate biosynthesis; (R)-pantoate from 3-methyl-2-oxobutanoate: step 1/2. Its function is as follows. Catalyzes the reversible reaction in which hydroxymethyl group from 5,10-methylenetetrahydrofolate is transferred onto alpha-ketoisovalerate to form ketopantoate. In Xylella fastidiosa (strain 9a5c), this protein is 3-methyl-2-oxobutanoate hydroxymethyltransferase.